The following is a 496-amino-acid chain: UDP-N-acetylmuramoylalanine--D-glutamate ligase (496 aa).

130 to 136 contacts ATP; that stretch reads GTNGKTT.

The protein belongs to the MurCDEF family. Interacts with PknA. Phosphorylated by PknA.

It localises to the cytoplasm. The enzyme catalyses UDP-N-acetyl-alpha-D-muramoyl-L-alanine + D-glutamate + ATP = UDP-N-acetyl-alpha-D-muramoyl-L-alanyl-D-glutamate + ADP + phosphate + H(+). It functions in the pathway cell wall biogenesis; peptidoglycan biosynthesis. Functionally, cell wall formation. Catalyzes the addition of glutamate to the nucleotide precursor UDP-N-acetylmuramoyl-L-alanine (UMA). This Mycobacterium tuberculosis (strain ATCC 25177 / H37Ra) protein is UDP-N-acetylmuramoylalanine--D-glutamate ligase.